A 543-amino-acid polypeptide reads, in one-letter code: Chaperonin GroEL 1 (543 aa).

Residues 29–32 (TLGP), Lys-50, 86–90 (DGTTT), Gly-414, and Asp-493 contribute to the ATP site. Residues 524–543 (KEDKGAPAGMGGMPPGGGMY) form a disordered region. Over residues 531-543 (AGMGGMPPGGGMY) the composition is skewed to gly residues.

The protein belongs to the chaperonin (HSP60) family. Forms a cylinder of 14 subunits composed of two heptameric rings stacked back-to-back. Interacts with the co-chaperonin GroES.

Its subcellular location is the cytoplasm. It carries out the reaction ATP + H2O + a folded polypeptide = ADP + phosphate + an unfolded polypeptide.. In terms of biological role, together with its co-chaperonin GroES, plays an essential role in assisting protein folding. The GroEL-GroES system forms a nano-cage that allows encapsulation of the non-native substrate proteins and provides a physical environment optimized to promote and accelerate protein folding. This chain is Chaperonin GroEL 1, found in Syntrophobacter fumaroxidans (strain DSM 10017 / MPOB).